We begin with the raw amino-acid sequence, 644 residues long: DNA mismatch repair protein MutL (644 aa).

The disordered stretch occupies residues 336–400 (ERPFEPSSPQ…EISRDSSLGE (65 aa)). The span at 373-400 (SKTHSTWDEASRVDTSRAEISRDSSLGE) shows a compositional bias: basic and acidic residues.

Belongs to the DNA mismatch repair MutL/HexB family.

Functionally, this protein is involved in the repair of mismatches in DNA. It is required for dam-dependent methyl-directed DNA mismatch repair. May act as a 'molecular matchmaker', a protein that promotes the formation of a stable complex between two or more DNA-binding proteins in an ATP-dependent manner without itself being part of a final effector complex. This chain is DNA mismatch repair protein MutL, found in Shewanella sp. (strain MR-7).